The sequence spans 123 residues: Large ribosomal subunit protein bL12 (123 aa).

Belongs to the bacterial ribosomal protein bL12 family. Homodimer. Part of the ribosomal stalk of the 50S ribosomal subunit. Forms a multimeric L10(L12)X complex, where L10 forms an elongated spine to which 2 to 4 L12 dimers bind in a sequential fashion. Binds GTP-bound translation factors.

Its function is as follows. Forms part of the ribosomal stalk which helps the ribosome interact with GTP-bound translation factors. Is thus essential for accurate translation. The polypeptide is Large ribosomal subunit protein bL12 (Rickettsia bellii (strain OSU 85-389)).